The primary structure comprises 122 residues: UPF0344 protein BPUM_1008 (122 aa).

The next 4 membrane-spanning stretches (helical) occupy residues 5-25 (LHITAWVLGIILFFVAFALAG), 33-53 (IVHMIVRLLYLIIIATGVELY), 60-80 (IPGFGGEYIGKMILGILVIGF), and 93-113 (SVTGVLIGFIIFAIVTILLGL).

It belongs to the UPF0344 family.

The protein resides in the cell membrane. This chain is UPF0344 protein BPUM_1008, found in Bacillus pumilus (strain SAFR-032).